A 570-amino-acid polypeptide reads, in one-letter code: Putative diflavin flavoprotein A 6 (570 aa).

Residues 38-231 form a zinc metallo-hydrolase region; that stretch reads AKGTTANSYL…FPTRLYATGH (194 aa). Positions 260-402 constitute a Flavodoxin-like domain; it reads VALIYASAYG…AGTDFAQALK (143 aa). The segment at 421–570 is flavodoxin-reductase-like; the sequence is VGRIVGSLCV…VHHRKSGNHY (150 aa).

It in the N-terminal section; belongs to the zinc metallo-hydrolase group 3 family. In the C-terminal section; belongs to the flavodoxin reductase family. It depends on Fe cation as a cofactor.

In terms of biological role, mediates electron transfer from NADH to oxygen, reducing it to water. This modular protein has 3 redox cofactors, in other organisms the same activity requires 2 or 3 proteins. The sequence is that of Putative diflavin flavoprotein A 6 (dfa6) from Nostoc sp. (strain PCC 7120 / SAG 25.82 / UTEX 2576).